The chain runs to 352 residues: Protein RecA (352 aa).

65–72 (GPESSGKT) lines the ATP pocket.

This sequence belongs to the RecA family.

The protein localises to the cytoplasm. In terms of biological role, can catalyze the hydrolysis of ATP in the presence of single-stranded DNA, the ATP-dependent uptake of single-stranded DNA by duplex DNA, and the ATP-dependent hybridization of homologous single-stranded DNAs. It interacts with LexA causing its activation and leading to its autocatalytic cleavage. Plays a functional role in the DNA rearrangement associated with the phenotypic switching from a pathogenic smooth to a nonpathogenic rough form in this bacterium. The chain is Protein RecA from Pseudomonas tolaasii.